A 453-amino-acid chain; its full sequence is Putative sodium-coupled neutral amino acid transporter 11 (453 aa).

The disordered stretch occupies residues 1-34 (MSYQQPQLRGPLQRETDPSDRESLVSGHEHGGKS). A compositionally biased stretch (basic and acidic residues) spans 12–32 (LQRETDPSDRESLVSGHEHGG). Helical transmembrane passes span 39–59 (AVFNVVNSVIGSGIIGLPYSM), 66–86 (LGILLLFWVSYITDFSLVLLI), 106–126 (GFPGYLLLSTLQFMYPFIAMI), 152–172 (FISRHFIIVVSTVTCTLPLSL), 179–199 (LGKISFISTILTAVILGVVVT), 222–242 (AIQAIGVMSFAFICHHNCFLV), 262–282 (ILVSVFICVLFATCGYFTFTG), 299–319 (VTFGRFCYGITVILTYPIECF), 337–357 (VFHVTLTAAIVTAATLISLLI), 359–379 (CLGIVLELNGVLCAAPLIFII), and 399–419 (MACVMFPVGAVVMVAGFVMAI).

Belongs to the amino acid/polyamine transporter 2 family. Widely expressed.

The protein resides in the membrane. Its function is as follows. Putative sodium-dependent amino acid/proton antiporter. This Rattus norvegicus (Rat) protein is Putative sodium-coupled neutral amino acid transporter 11 (Slc38a11).